The following is a 309-amino-acid chain: Tagatose-6-phosphate kinase (309 aa).

Belongs to the carbohydrate kinase PfkB family. LacC subfamily.

It catalyses the reaction D-tagatofuranose 6-phosphate + ATP = D-tagatofuranose 1,6-bisphosphate + ADP + H(+). It functions in the pathway carbohydrate metabolism; D-tagatose 6-phosphate degradation; D-glyceraldehyde 3-phosphate and glycerone phosphate from D-tagatose 6-phosphate: step 1/2. This is Tagatose-6-phosphate kinase from Streptococcus pneumoniae (strain P1031).